The primary structure comprises 157 residues: MYWRRAALVGTRLIPVRSSSAGRLEGPAGISGSGMGNSTSSSLGNAATAPVNQIQETISNNCVVIFSKTSCSYCTMAKNLFHDMNVNYKVVELDMLEYGSQFQDALHKMTGERTVPRIFVNGTFIGGATDTHRLHKEGKLLPLVHQCHLKNSKREEL.

A mitochondrion-targeting transit peptide spans 1-18 (MYWRRAALVGTRLIPVRS). Serine 20 is subject to Phosphoserine. The Glutaredoxin domain occupies 51-151 (VNQIQETISN…PLVHQCHLKN (101 aa)). Cysteine 62 lines the [2Fe-2S] cluster pocket. Lysine 68 serves as a coordination point for glutathione. Cysteine 71 bears the S-glutathionyl cysteine; alternate mark. An intrachain disulfide couples cysteine 71 to cysteine 74. Residues glutamine 103 and valine 115 each contribute to the glutathione site. Residue cysteine 147 coordinates [2Fe-2S] cluster.

This sequence belongs to the glutaredoxin family. As to quaternary structure, monomer; active form. Homodimer; inactive form. The homodimer is probably linked by 1 2Fe-2S cluster.

It is found in the mitochondrion. The 2Fe-2S present in the homodimer leads to inactivation of the enzyme. The 2Fe-2S may serve as a redox sensor: the presence of one-electron oxidants or reductants leading to the loss of the 2Fe-2S cluster, subsequent monomerization and activation of the enzyme. In terms of biological role, glutathione-dependent oxidoreductase that facilitates the maintenance of mitochondrial redox homeostasis upon induction of apoptosis by oxidative stress. Involved in response to hydrogen peroxide and regulation of apoptosis caused by oxidative stress. Acts as a very efficient catalyst of monothiol reactions because of its high affinity for protein glutathione-mixed disulfides. Can receive electrons not only from glutathione (GSH), but also from thioredoxin reductase supporting both monothiol and dithiol reactions. Efficiently catalyzes both glutathionylation and deglutathionylation of mitochondrial complex I, which in turn regulates the superoxide production by the complex. Overexpression decreases the susceptibility to apoptosis and prevents loss of cardiolipin and cytochrome c release. This Bos taurus (Bovine) protein is Glutaredoxin-2, mitochondrial (GLRX2).